The sequence spans 692 residues: Epithelial sodium channel subunit alpha (692 aa).

Residues M1–E67 are disordered. Residues M1 to A108 lie on the Cytoplasmic side of the membrane. Residues P56 to T65 are compositionally biased toward low complexity. Residues F109–F129 traverse the membrane as a helical segment. At G130–S585 the chain is on the extracellular side. 10 disulfides stabilise this stretch: C156–C328, C252–C259, C305–C312, C417–C502, C439–C479, C439–C498, C443–C494, C452–C479, C452–C502, and C454–C468. Positions R198–S266 are gating release of inhibition by proteolysis (GRIP); protease-sensitive region that is responsible for the proteolytic activation of the channel. A helical membrane pass occupies residues V586–M606. At L607–P692 the chain is on the cytoplasmic side. The interval E627–P692 is disordered. The span at V628–P637 shows a compositional bias: polar residues. The span at G653–A666 shows a compositional bias: pro residues. The PY motif; recruits WW domain-containing proteins and is thereby required for ubiquitination and inhibition of the channel by NEDD4 and NEDD4L motif lies at P663–Y667. The segment covering A682–P692 has biased composition (low complexity).

This sequence belongs to the amiloride-sensitive sodium channel (TC 1.A.6) family. SCNN1A subfamily. Heterotrimer; containing an alpha/SCNN1A, a beta/SCNN1B and a gamma/SCNN1G subunit. Interacts with WWP1 (via WW domains). Interacts with WWP2 (via WW domains); inhibits the channel. Interacts with BPIFA1; the interaction is indirect via SCNN1B and inhibits the proteolytic processing of SCNN1A and SCNN1G and the activation of ENaC. Interacts with the full-length immature form of PCSK9 (pro-PCSK9). Post-translationally, ubiquitinated. Can be ubiquitinated at multiple sites and undergo monoubiquitination and polyubiquitination. Ubiquitination by NEDD4 or NEDD4L inhibits the ENaC channel through endocytosis, intracellular retention and degradation of its individual subunits. In terms of processing, N-glycosylated. ENaC is activated through the proteolytic maturation of its subunits. Furin cleaves the SCNN1A subunit, which results in a stepwise increase in the open probability of the channel due to the release of an inhibitory tract. BPIFA1, which is recruited by the SCNN1B subunit, prevents the proteolytic activation of ENaC.

It is found in the apical cell membrane. The protein localises to the cell projection. It localises to the cilium. Its subcellular location is the cytoplasmic granule. The protein resides in the cytoplasm. It is found in the cytoplasmic vesicle. The protein localises to the secretory vesicle. It localises to the acrosome. Its subcellular location is the flagellum. The catalysed reaction is Na(+)(in) = Na(+)(out). Its activity is regulated as follows. Originally identified and characterized by its inhibition by the diuretic drug amiloride. In terms of biological role, this is one of the three pore-forming subunits of the heterotrimeric epithelial sodium channel (ENaC), a critical regulator of sodium balance and fluid homeostasis. ENaC operates in epithelial tissues, where it mediates the electrodiffusion of sodium ions from extracellular fluid through the apical membrane of cells, with water following osmotically. It plays a key role in maintaining sodium homeostasis through electrogenic sodium reabsorption in the kidneys. Additionally, ENaC is essential for airway surface liquid homeostasis, which is crucial for proper mucus clearance. The protein is Epithelial sodium channel subunit alpha of Pan troglodytes (Chimpanzee).